The chain runs to 148 residues: 3-dehydroquinate dehydratase (148 aa).

The Proton acceptor role is filled by Y23. Substrate-binding residues include N74, H80, and D87. Catalysis depends on H100, which acts as the Proton donor. Substrate is bound by residues 101–102 (IS) and R111.

This sequence belongs to the type-II 3-dehydroquinase family. As to quaternary structure, homododecamer.

It catalyses the reaction 3-dehydroquinate = 3-dehydroshikimate + H2O. It functions in the pathway metabolic intermediate biosynthesis; chorismate biosynthesis; chorismate from D-erythrose 4-phosphate and phosphoenolpyruvate: step 3/7. In terms of biological role, catalyzes a trans-dehydration via an enolate intermediate. This is 3-dehydroquinate dehydratase from Anoxybacillus flavithermus (strain DSM 21510 / WK1).